A 154-amino-acid polypeptide reads, in one-letter code: Superoxide dismutase [Cu-Zn] (154 aa).

Residues H47, H49, and H64 each coordinate Cu cation. C58 and C147 are disulfide-bonded. Zn(2+) is bound by residues H64, H72, H81, and D84. Cu cation is bound at residue H121. A substrate-binding site is contributed by R144.

This sequence belongs to the Cu-Zn superoxide dismutase family. In terms of assembly, homodimer. The cofactor is Cu cation. Zn(2+) serves as cofactor.

Its subcellular location is the cytoplasm. The enzyme catalyses 2 superoxide + 2 H(+) = H2O2 + O2. Functionally, destroys radicals which are normally produced within the cells and which are toxic to biological systems. In Schizosaccharomyces pombe (strain 972 / ATCC 24843) (Fission yeast), this protein is Superoxide dismutase [Cu-Zn] (sod1).